Here is a 498-residue protein sequence, read N- to C-terminus: Diacylglycerol O-acyltransferase 1 (498 aa).

The tract at residues Met-1–Thr-66 is disordered. Over Met-1 to Ser-92 the chain is Cytoplasmic. The interval Met-1 to Gly-96 is involved in homomerization. Ser-20 bears the Phosphoserine mark. The span at His-58–Val-68 shows a compositional bias: basic and acidic residues. Residues Asn-93 to Ile-127 form a helical membrane-spanning segment. Residues Gln-128–Ser-139 lie on the Lumenal side of the membrane. Positions Gln-128 to Ser-139 are extracellular loop 1 (EL1). Residues Trp-140–Val-165 form a helical membrane-spanning segment. The MBOAT fold stretch occupies residues Trp-140 to Ala-498. The Cytoplasmic portion of the chain corresponds to Gly-166–Glu-170. The chain crosses the membrane as a helical span at residues Gln-171–Leu-193. The Lumenal portion of the chain corresponds to Leu-194–Pro-200. The chain crosses the membrane as a helical span at residues Val-201–Val-232. Topologically, residues Lys-233–Ile-284 are cytoplasmic. Residues Lys-235–Arg-287 are intracellular loop 1 (IL1). A helical membrane pass occupies residues Arg-285–Met-319. The Lumenal segment spans residues Lys-320–Asp-326. Residues Tyr-327–Leu-364 form a helical membrane-spanning segment. Over Gln-365 to Asn-410 the chain is Cytoplasmic. The interval Gln-365–Asn-410 is intracellular loop 2 (IL2). Positions Phe-371 to Asn-377 match the FYXDWWN motif motif. An acyl-CoA-binding positions include Trp-385 to His-393, Tyr-401, and Arg-415. The segment at Pro-391–Leu-405 is amphipathic helix (AH). A helical membrane pass occupies residues Lys-411–Ser-431. His-426 is an active-site residue. Over Ile-432–Leu-439 the chain is Lumenal. The chain crosses the membrane as a helical span at residues Trp-440–Phe-458. The Cytoplasmic portion of the chain corresponds to Phe-459–Gln-460. A helical transmembrane segment spans residues Gly-461–Tyr-492. Residue Tyr-488 participates in an acyl-CoA binding. Topologically, residues Asp-493–Ala-498 are lumenal.

It belongs to the membrane-bound acyltransferase family. Sterol o-acyltransferase subfamily. Homodimer or homotetramer; both forms have similar enzymatic activities.

The protein resides in the endoplasmic reticulum membrane. The catalysed reaction is an acyl-CoA + a 1,2-diacyl-sn-glycerol = a triacyl-sn-glycerol + CoA. It carries out the reaction all-trans-retinol + an acyl-CoA = an all-trans-retinyl ester + CoA. The enzyme catalyses 2-(9Z-octadecenoyl)-glycerol + (9Z)-octadecenoyl-CoA = 1,2-di-(9Z-octadecenoyl)-sn-glycerol + CoA. It catalyses the reaction 1,2-di-(9Z-octadecenoyl)-sn-glycerol + (9Z)-octadecenoyl-CoA = 1,2,3-tri-(9Z-octadecenoyl)-glycerol + CoA. The catalysed reaction is all-trans-retinol + hexadecanoyl-CoA = all-trans-retinyl hexadecanoate + CoA. It carries out the reaction 1-O-(9Z-octadecenyl)-glycerol + (9Z)-octadecenoyl-CoA = 1-O-(9Z-octadecyl)-3-(9Z-octadecenoyl)-glycerol + CoA. The enzyme catalyses 1-O-(9Z-octadecyl)-3-(9Z-octadecenoyl)-glycerol + (9Z)-octadecenoyl-CoA = 1-O-(9Z-octadecenyl)-2,3-di-(9Z-octadecenoyl)glycerol + CoA. It catalyses the reaction 1-(9Z-octadecenoyl)-glycerol + (9Z)-octadecenoyl-CoA = 1,2-di-(9Z-octadecenoyl)-glycerol + CoA. The catalysed reaction is 1,2-di-(9Z-octadecenoyl)-glycerol + (9Z)-octadecenoate + H(+) = 1,2,3-tri-(9Z-octadecenoyl)-glycerol + H2O. It carries out the reaction 1-octadecanoyl-2-(5Z,8Z,11Z,14Z-eicosatetraenoyl)-sn-glycerol + (9Z)-octadecenoyl-CoA = 1-octadecanoyl-2-(5Z,8Z,11Z,14Z)-eicosatetraenoyl-3-(9Z)-octadecenoyl-sn-glycerol + CoA. The enzyme catalyses hexadecane-1,2-diol + 2 hexadecanoyl-CoA = 1,2-O,O-dihexadecanoyl-1,2-hexadecanediol + 2 CoA. It catalyses the reaction hexadecane-1,2-diol + hexadecanoyl-CoA = 2-hydroxyhexadecyl hexadecanoate + CoA. The catalysed reaction is 2-(9Z-octadecenoyl)-glycerol + hexadecanoyl-CoA = 1-hexadecanoyl-2-(9Z-octadecenoyl)-sn-glycerol + CoA. It carries out the reaction 1,2-di-(9Z-octadecenoyl)-sn-glycerol + hexadecanoyl-CoA = 1,2-di-(9Z)-octadecenoyl-3-hexadecanoyl-sn-glycerol + CoA. The enzyme catalyses hexadecan-1-ol + hexadecanoyl-CoA = hexadecanyl hexadecanoate + CoA. It catalyses the reaction 13-cis-retinol + hexadecanoyl-CoA = 13-cis-retinyl hexadecanoate + CoA. The catalysed reaction is 1,3-di-(9Z-octadecenoyl)-glycerol + (9Z)-octadecenoyl-CoA = 1,2,3-tri-(9Z-octadecenoyl)-glycerol + CoA. It carries out the reaction 2,3-di-(9Z)-octadecenoyl-sn-glycerol + (9Z)-octadecenoyl-CoA = 1,2,3-tri-(9Z-octadecenoyl)-glycerol + CoA. It participates in lipid metabolism; glycerolipid metabolism. Catalyzes the terminal and only committed step in triacylglycerol synthesis by using diacylglycerol and fatty acyl CoA as substrates. Highly expressed in epithelial cells of the small intestine and its activity is essential for the absorption of dietary fats. In liver, plays a role in esterifying exogenous fatty acids to glycerol, and is required to synthesize fat for storage. Also present in female mammary glands, where it produces fat in the milk. May be involved in VLDL (very low density lipoprotein) assembly. In contrast to DGAT2 it is not essential for survival. Functions as the major acyl-CoA retinol acyltransferase (ARAT) in the skin, where it acts to maintain retinoid homeostasis and prevent retinoid toxicity leading to skin and hair disorders. Exhibits additional acyltransferase activities, includin acyl CoA:monoacylglycerol acyltransferase (MGAT), wax monoester and wax diester synthases. Also able to use 1-monoalkylglycerol (1-MAkG) as an acyl acceptor for the synthesis of monoalkyl-monoacylglycerol (MAMAG). In Rattus norvegicus (Rat), this protein is Diacylglycerol O-acyltransferase 1.